The primary structure comprises 443 residues: Thymidine phosphorylase (443 aa).

This sequence belongs to the thymidine/pyrimidine-nucleoside phosphorylase family. As to quaternary structure, homodimer.

The catalysed reaction is thymidine + phosphate = 2-deoxy-alpha-D-ribose 1-phosphate + thymine. It functions in the pathway pyrimidine metabolism; dTMP biosynthesis via salvage pathway; dTMP from thymine: step 1/2. The enzymes which catalyze the reversible phosphorolysis of pyrimidine nucleosides are involved in the degradation of these compounds and in their utilization as carbon and energy sources, or in the rescue of pyrimidine bases for nucleotide synthesis. The chain is Thymidine phosphorylase from Shewanella sp. (strain MR-7).